The sequence spans 591 residues: PE-PGRS family protein PE_PGRS5 (591 aa).

Residues 1–93 (MSFVIAQPEM…AGAYASAEAA (93 aa)) enclose the PE domain. Residues 94–591 (NAGPNMLAAV…GGKGNNGNPG (498 aa)) form a PGRS region. Gly residues-rich tracts occupy residues 303 to 324 (GAGGAGGAGGDGAPGGNGGNGG), 336 to 363 (ASGGNGATGGNGGVGAPGGAGGNGGHVS), 371 to 412 (GAGG…GDGG), 477 to 491 (SEAGDGGKGGLGGDG), 539 to 567 (AGTGGDGGVGGTGAAGGKGGAGGSGGVNG), and 579 to 591 (GATGGKGNNGNPG). Disordered regions lie at residues 303-412 (GAGG…GDGG), 468-491 (GSVNTPIGGSEAGDGGKGGLGGDG), and 539-591 (AGTG…GNPG).

It belongs to the mycobacterial PE family. PGRS subfamily. Interacts with human TLR4.

Its subcellular location is the host endoplasmic reticulum. Functionally, involved in endoplasmic reticulum (ER) stress-mediated apoptosis through human Toll-like receptor 4 (TLR4) signaling pathway. Localizes to the host ER, leading to ER stress, disruption of intracellular Ca(2+) homeostasis and increase of nitric oxide (NO) and reactive oxygen species (ROS) levels. Stress response results in caspase-8 activation and apoptosis of macrophage cells. Apoptosis may lead to dissemination of the bacteria, thereby spreading the disease. The sequence is that of PE-PGRS family protein PE_PGRS5 from Mycobacterium tuberculosis (strain ATCC 25618 / H37Rv).